The following is a 425-amino-acid chain: Enolase (425 aa).

Residue Gln162 participates in (2R)-2-phosphoglycerate binding. Glu204 serves as the catalytic Proton donor. Positions 241, 288, and 315 each coordinate Mg(2+). (2R)-2-phosphoglycerate is bound by residues Lys340, Arg369, Ser370, and Lys391. Lys340 serves as the catalytic Proton acceptor.

The protein belongs to the enolase family. Mg(2+) serves as cofactor.

The protein resides in the cytoplasm. The protein localises to the secreted. It is found in the cell surface. The enzyme catalyses (2R)-2-phosphoglycerate = phosphoenolpyruvate + H2O. It functions in the pathway carbohydrate degradation; glycolysis; pyruvate from D-glyceraldehyde 3-phosphate: step 4/5. Its function is as follows. Catalyzes the reversible conversion of 2-phosphoglycerate (2-PG) into phosphoenolpyruvate (PEP). It is essential for the degradation of carbohydrates via glycolysis. This is Enolase from Porphyromonas gingivalis (strain ATCC 33277 / DSM 20709 / CIP 103683 / JCM 12257 / NCTC 11834 / 2561).